The sequence spans 354 residues: Guanine nucleotide-binding protein G(i) subunit alpha-1 (354 aa).

Residue glycine 2 is the site of N-myristoyl glycine attachment. Cysteine 3 is lipidated: S-palmitoyl cysteine. Residues 32 to 354 (REVKLLLLGA…KNNLKDCGLF (323 aa)) enclose the G-alpha domain. Positions 35–48 (KLLLLGAGESGKST) are G1 motif. GTP-binding positions include 43–48 (ESGKST), 150–151 (DS), and 175–178 (LRTR). Residue serine 47 participates in Mg(2+) binding. The segment at 173 to 181 (DVLRTRVKT) is G2 motif. Threonine 181 serves as a coordination point for Mg(2+). The interval 196 to 205 (FKMFDVGGQR) is G3 motif. GTP contacts are provided by residues 200 to 204 (DVGGQ), 269 to 272 (NKKD), and alanine 326. The interval 265 to 272 (ILFLNKKD) is G4 motif. Residues 324–329 (TCATDT) form a G5 motif region.

It belongs to the G-alpha family. G(i/o/t/z) subfamily. As to quaternary structure, heterotrimeric G proteins are composed of 3 units; alpha, beta and gamma. The alpha chain contains the guanine nucleotide binding site. Part of a spindle orientation complex. Identified in complex with the beta subunit GNB1 and the gamma subunit GNG1. Identified in complex with the beta subunit GNB1 and the gamma subunit GNG2. GTP binding causes dissociation of the heterotrimer, liberating the individual subunits so that they can interact with downstream effector proteins. In terms of processing, myristoylation at Gly-2 is required for membrane anchoring before palmitoylation. Post-translationally, palmitoylation at Cys-3 varies with membrane lipid composition.

The protein localises to the nucleus. It is found in the cytoplasm. Its subcellular location is the cell membrane. The protein resides in the cytoskeleton. It localises to the microtubule organizing center. The protein localises to the centrosome. It is found in the cell cortex. Its subcellular location is the membrane. The catalysed reaction is GTP + H2O = GDP + phosphate + H(+). Guanine nucleotide-binding proteins (G proteins) function as transducers downstream of G protein-coupled receptors (GPCRs) in numerous signaling cascades. The alpha chain contains the guanine nucleotide binding site and alternates between an active, GTP-bound state and an inactive, GDP-bound state. Signaling by an activated GPCR promotes GDP release and GTP binding. The alpha subunit has a low GTPase activity that converts bound GTP to GDP, thereby terminating the signal. Both GDP release and GTP hydrolysis are modulated by numerous regulatory proteins. Signaling is mediated via effector proteins, such as adenylate cyclase. Inhibits adenylate cyclase activity of ADCY1, ADCY5 and ADCY6, leading to decreased intracellular cAMP levels. Required for cortical dynein-dynactin complex recruitment during metaphase. This chain is Guanine nucleotide-binding protein G(i) subunit alpha-1 (GNAI1), found in Gallus gallus (Chicken).